The following is a 274-amino-acid chain: Proliferating cell nuclear antigen 1 (274 aa).

The DNA-binding element occupies 61–80; the sequence is RCDRERVLGVNIASLNKVFK.

It belongs to the PCNA family. As to quaternary structure, homotrimer. Interacts with ORC1 (via PIP-box motif); the interaction occurs during DNA replication in trophozoites. Interacts with ORC5; the interaction occurs during the trophozoite stage but not at the late schizont stage. Interacts with FEN1.

The protein localises to the nucleus. It localises to the chromosome. It is found in the cytoplasm. In terms of biological role, auxiliary protein of DNA polymerase delta and is involved in the control of DNA replication by increasing the polymerase processibility during elongation of the leading strand. Involved in DNA damage response. The polypeptide is Proliferating cell nuclear antigen 1 (Plasmodium falciparum (isolate 3D7)).